The primary structure comprises 715 residues: Inducible lysine decarboxylase (715 aa).

Position 367 is an N6-(pyridoxal phosphate)lysine (K367).

Belongs to the Orn/Lys/Arg decarboxylase class-I family. As to quaternary structure, homodecamer. Interacts with RavA. It depends on pyridoxal 5'-phosphate as a cofactor.

It is found in the cytoplasm. The catalysed reaction is L-lysine + H(+) = cadaverine + CO2. This chain is Inducible lysine decarboxylase (cadA), found in Escherichia coli O157:H7.